A 272-amino-acid chain; its full sequence is Ribosomal RNA small subunit methyltransferase A (272 aa).

Histidine 10, leucine 12, glycine 37, glutamate 57, aspartate 82, and asparagine 98 together coordinate S-adenosyl-L-methionine.

Belongs to the class I-like SAM-binding methyltransferase superfamily. rRNA adenine N(6)-methyltransferase family. RsmA subfamily.

The protein localises to the cytoplasm. It carries out the reaction adenosine(1518)/adenosine(1519) in 16S rRNA + 4 S-adenosyl-L-methionine = N(6)-dimethyladenosine(1518)/N(6)-dimethyladenosine(1519) in 16S rRNA + 4 S-adenosyl-L-homocysteine + 4 H(+). Its function is as follows. Specifically dimethylates two adjacent adenosines (A1518 and A1519) in the loop of a conserved hairpin near the 3'-end of 16S rRNA in the 30S particle. May play a critical role in biogenesis of 30S subunits. The sequence is that of Ribosomal RNA small subunit methyltransferase A from Gloeobacter violaceus (strain ATCC 29082 / PCC 7421).